A 268-amino-acid chain; its full sequence is Ribosomal RNA small subunit methyltransferase A (268 aa).

Residues Asn18, Leu20, Gly45, Glu66, Asp91, and Asn112 each coordinate S-adenosyl-L-methionine.

Belongs to the class I-like SAM-binding methyltransferase superfamily. rRNA adenine N(6)-methyltransferase family. RsmA subfamily.

Its subcellular location is the cytoplasm. It carries out the reaction adenosine(1518)/adenosine(1519) in 16S rRNA + 4 S-adenosyl-L-methionine = N(6)-dimethyladenosine(1518)/N(6)-dimethyladenosine(1519) in 16S rRNA + 4 S-adenosyl-L-homocysteine + 4 H(+). Functionally, specifically dimethylates two adjacent adenosines (A1518 and A1519) in the loop of a conserved hairpin near the 3'-end of 16S rRNA in the 30S particle. May play a critical role in biogenesis of 30S subunits. The protein is Ribosomal RNA small subunit methyltransferase A of Pseudoalteromonas translucida (strain TAC 125).